The following is a 133-amino-acid chain: DNA-directed RNA polymerases I and III subunit RPAC2 (133 aa).

Position 1 is an N-acetylmethionine (Met-1). Residues 1-22 are disordered; the sequence is MEEDQELERKMSGVKTSMAEGE.

Belongs to the archaeal Rpo11/eukaryotic RPB11/RPC19 RNA polymerase subunit family. Component of the RNA polymerase I and RNA polymerase III complexes consisting of at least 13 and 17 subunits, respectively. The transcriptionally active RNA polymerase III complex consists of a ten-subunit horseshoe-shaped catalytic core composed of POLR3A/RPC1, POLR3B/RPC2, POLR1C/RPAC1, POLR1D/RPAC2, POLR3K/RPC10, POLR2E/RPABC1, POLR2F/RPABC2, POLR2H/RPABC3, POLR2K/RPABC4 and POLR2L/RPABC5; a mobile stalk composed of two subunits POLR3H/RPC8 and CRCP/RPC9, protruding from the core and functioning primarily in transcription initiation; and additional subunits homologous to general transcription factors of the RNA polymerase II machinery, POLR3C/RPC3-POLR3F/RPC6-POLR3G/RPC7 heterotrimer required for transcription initiation and POLR3D/RPC4-POLR3E/RPC5 heterodimer involved in both transcription initiation and termination.

Its subcellular location is the nucleus. DNA-dependent RNA polymerase catalyzes the transcription of DNA into RNA using the four ribonucleoside triphosphates as substrates. Common component of RNA polymerases I and III which synthesize ribosomal RNA precursor pre-rRNA and short non-coding RNAs including 5S rRNA, snRNAs, tRNAs and miRNAs, respectively. The protein is DNA-directed RNA polymerases I and III subunit RPAC2 (POLR1D) of Bos taurus (Bovine).